We begin with the raw amino-acid sequence, 269 residues long: 5'-nucleotidase SurE (269 aa).

Residues aspartate 11, aspartate 12, serine 42, and asparagine 90 each contribute to the a divalent metal cation site.

This sequence belongs to the SurE nucleotidase family. A divalent metal cation serves as cofactor.

Its subcellular location is the cytoplasm. The catalysed reaction is a ribonucleoside 5'-phosphate + H2O = a ribonucleoside + phosphate. Functionally, nucleotidase that shows phosphatase activity on nucleoside 5'-monophosphates. This chain is 5'-nucleotidase SurE, found in Haloarcula marismortui (strain ATCC 43049 / DSM 3752 / JCM 8966 / VKM B-1809) (Halobacterium marismortui).